A 167-amino-acid chain; its full sequence is Small heat shock protein C1 (167 aa).

One can recognise a sHSP domain in the interval proline 59 to asparagine 167.

It belongs to the small heat shock protein (HSP20) family.

This chain is Small heat shock protein C1 (hspC1), found in Rickettsia felis (strain ATCC VR-1525 / URRWXCal2) (Rickettsia azadi).